A 188-amino-acid polypeptide reads, in one-letter code: dCTP deaminase (188 aa).

DCTP contacts are provided by residues 111–116, 135–137, Q156, Y170, and Q180; these read KSTYAR and TLE. The active-site Proton donor/acceptor is E137.

Belongs to the dCTP deaminase family. Homotrimer.

The catalysed reaction is dCTP + H2O + H(+) = dUTP + NH4(+). It participates in pyrimidine metabolism; dUMP biosynthesis; dUMP from dCTP (dUTP route): step 1/2. Its function is as follows. Catalyzes the deamination of dCTP to dUTP. The protein is dCTP deaminase of Dichelobacter nodosus (strain VCS1703A).